The primary structure comprises 667 residues: DNA ligase (667 aa).

NAD(+) is bound by residues 34-38 (DAEYD), 83-84 (SL), and Glu-113. Catalysis depends on Lys-115, which acts as the N6-AMP-lysine intermediate. NAD(+)-binding residues include Arg-136, Glu-170, Lys-286, and Lys-310. Zn(2+) contacts are provided by Cys-404, Cys-407, Cys-422, and Cys-427. Residues 589–667 (ATDSVLSGKT…EQQLEDVVGK (79 aa)) form the BRCT domain.

This sequence belongs to the NAD-dependent DNA ligase family. LigA subfamily. The cofactor is Mg(2+). Mn(2+) serves as cofactor.

It carries out the reaction NAD(+) + (deoxyribonucleotide)n-3'-hydroxyl + 5'-phospho-(deoxyribonucleotide)m = (deoxyribonucleotide)n+m + AMP + beta-nicotinamide D-nucleotide.. DNA ligase that catalyzes the formation of phosphodiester linkages between 5'-phosphoryl and 3'-hydroxyl groups in double-stranded DNA using NAD as a coenzyme and as the energy source for the reaction. It is essential for DNA replication and repair of damaged DNA. The chain is DNA ligase from Oceanobacillus iheyensis (strain DSM 14371 / CIP 107618 / JCM 11309 / KCTC 3954 / HTE831).